Consider the following 188-residue polypeptide: Elongation factor P (188 aa).

The protein belongs to the elongation factor P family.

The protein localises to the cytoplasm. It functions in the pathway protein biosynthesis; polypeptide chain elongation. Involved in peptide bond synthesis. Stimulates efficient translation and peptide-bond synthesis on native or reconstituted 70S ribosomes in vitro. Probably functions indirectly by altering the affinity of the ribosome for aminoacyl-tRNA, thus increasing their reactivity as acceptors for peptidyl transferase. This chain is Elongation factor P, found in Caulobacter vibrioides (strain ATCC 19089 / CIP 103742 / CB 15) (Caulobacter crescentus).